The chain runs to 400 residues: Octopine dehydrogenase (400 aa).

Residues 10-13 and 35-38 each bind NADH; these read GGNG and FADE. Residues Gln118 and Thr143 each coordinate pyruvate. Residue Gln118 coordinates substrate. NAD(+) is bound at residue Cys148. Residue Met206 participates in L-arginine binding. Residue His212 participates in pyruvate binding. His212 is an active-site residue. Position 324 (Arg324) interacts with NAD(+).

This sequence belongs to the lysopine/nopaline/octopine/opine/vitopine dehydrogenases family.

It carries out the reaction D-octopine + NAD(+) + H2O = L-arginine + pyruvate + NADH + H(+). Its function is as follows. Catalyzes the reverse reaction of octopine dehydrogenation. Acts on L-arginine in preference to other substrates. The polypeptide is Octopine dehydrogenase (Mizuhopecten yessoensis (Japanese scallop)).